Reading from the N-terminus, the 215-residue chain is Vesicle-trafficking protein SEC22b (215 aa).

Over 1 to 190 (MVLLTMIARV…RQDAKYLNMR (190 aa)) the chain is Cytoplasmic. The region spanning 6–119 (MIARVADGLP…YSFIEFDNYI (114 aa)) is the Longin domain. Positions 134–194 (NLSSVNTELQ…KYLNMRSTYA (61 aa)) constitute a v-SNARE coiled-coil homology domain. The helical transmembrane segment at 191–213 (STYAKLAAVAVFSVMLIVYIRFW) threads the bilayer. Topologically, residues 214 to 215 (WL) are lumenal.

The protein belongs to the synaptobrevin family. As to quaternary structure, component of 2 distinct SNARE complexes.

It is found in the endoplasmic reticulum membrane. The protein resides in the endoplasmic reticulum-Golgi intermediate compartment membrane. It localises to the golgi apparatus. The protein localises to the cis-Golgi network membrane. Its subcellular location is the trans-Golgi network membrane. It is found in the melanosome. Its function is as follows. SNARE involved in targeting and fusion of ER-derived transport vesicles with the Golgi complex as well as Golgi-derived retrograde transport vesicles with the ER. This Xenopus tropicalis (Western clawed frog) protein is Vesicle-trafficking protein SEC22b.